The chain runs to 20 residues: L-amino-acid oxidase L1 (20 aa).

It belongs to the flavin monoamine oxidase family. FIG1 subfamily. As to quaternary structure, monomer. This is in contrast with most of its orthologs, that are non-covalently linked homodimers. FAD is required as a cofactor. Post-translationally, N-glycosylated. In terms of tissue distribution, expressed by the venom gland.

It localises to the secreted. It catalyses the reaction an L-alpha-amino acid + O2 + H2O = a 2-oxocarboxylate + H2O2 + NH4(+). The catalysed reaction is L-leucine + O2 + H2O = 4-methyl-2-oxopentanoate + H2O2 + NH4(+). The enzyme catalyses L-phenylalanine + O2 + H2O = 3-phenylpyruvate + H2O2 + NH4(+). It carries out the reaction L-tryptophan + O2 + H2O = indole-3-pyruvate + H2O2 + NH4(+). It catalyses the reaction L-methionine + O2 + H2O = 4-methylsulfanyl-2-oxobutanoate + H2O2 + NH4(+). The catalysed reaction is L-isoleucine + O2 + H2O = (S)-3-methyl-2-oxopentanoate + H2O2 + NH4(+). The enzyme catalyses L-tyrosine + O2 + H2O = 3-(4-hydroxyphenyl)pyruvate + H2O2 + NH4(+). Catalyzes an oxidative deamination of predominantly hydrophobic and aromatic L-amino acids, thus producing hydrogen peroxide that may contribute to the diverse toxic effects of this enzyme. Is active on L-Met, L-Ile, L-Leu, L-Phe, L-Trp, and L-Tyr. Exhibits diverse biological activities, such as hemorrhage, hemolysis, edema, apoptosis of vascular endothelial cells or tumor cell lines, antibacterial and antiparasitic activities, as well as regulation of platelet aggregation. Its effect on platelets is controversial, since it either induces aggregation or inhibits agonist-induced aggregation. These different effects are probably due to different experimental conditions. The protein is L-amino-acid oxidase L1 of Daboia russelii (Russel's viper).